Here is a 95-residue protein sequence, read N- to C-terminus: uncharacterized protein (95 aa).

Positions 14–50 (KMEQKLQEQLDGLLEKYTELLLGETNDELKEEVKQWI) form a coiled coil.

This is an uncharacterized protein from Bacillus subtilis (strain 168).